The following is a 443-amino-acid chain: Cysteine proteinase B (443 aa).

The signal sequence occupies residues 1 to 27 (MATSRAALCAVAVVCVVLAAACAPARA). A propeptide spans 28-125 (IHVGTPAAAL…YRKARADLSA (98 aa)) (activation peptide). 2 cysteine pairs are disulfide-bonded: cysteine 147-cysteine 188 and cysteine 181-cysteine 226. Cysteine 150 is a catalytic residue. N-linked (GlcNAc...) asparagine glycosylation occurs at asparagine 228. Cysteine 281 and cysteine 329 are joined by a disulfide. Active-site residues include histidine 288 and asparagine 308.

The protein belongs to the peptidase C1 family.

This chain is Cysteine proteinase B (LMCPB), found in Leishmania mexicana.